The primary structure comprises 144 residues: 3-hydroxyacyl-[acyl-carrier-protein] dehydratase FabZ (144 aa).

Residue H48 is part of the active site.

Belongs to the thioester dehydratase family. FabZ subfamily.

The protein localises to the cytoplasm. The enzyme catalyses a (3R)-hydroxyacyl-[ACP] = a (2E)-enoyl-[ACP] + H2O. Involved in unsaturated fatty acids biosynthesis. Catalyzes the dehydration of short chain beta-hydroxyacyl-ACPs and long chain saturated and unsaturated beta-hydroxyacyl-ACPs. This Chloroflexus aggregans (strain MD-66 / DSM 9485) protein is 3-hydroxyacyl-[acyl-carrier-protein] dehydratase FabZ.